A 365-amino-acid chain; its full sequence is uncharacterized protein (365 aa).

Basic and acidic residues-rich tracts occupy residues 1–27 (MDNVQEHDPDTQEHNNETQNHKQEDHS) and 315–339 (AKDDEQYAKRLAKEEEERGKKETPK). 2 disordered regions span residues 1 to 31 (MDNVQEHDPDTQEHNNETQNHKQEDHSNSYQ) and 308 to 365 (KEEK…CLIS). A compositionally biased stretch (polar residues) spans 340-353 (KASNTPRRNKSNTQ).

It to yeast YGL082w. In terms of assembly, interacts with sad1.

The protein resides in the cytoplasm. This is an uncharacterized protein from Schizosaccharomyces pombe (strain 972 / ATCC 24843) (Fission yeast).